A 321-amino-acid chain; its full sequence is Lipoyl synthase (321 aa).

Residues cysteine 68, cysteine 73, cysteine 79, cysteine 94, cysteine 98, cysteine 101, and serine 308 each coordinate [4Fe-4S] cluster. The 218-residue stretch at 80–297 (FNHGTATFMI…KEIALELGFT (218 aa)) folds into the Radical SAM core domain.

It belongs to the radical SAM superfamily. Lipoyl synthase family. Requires [4Fe-4S] cluster as cofactor.

It is found in the cytoplasm. The catalysed reaction is [[Fe-S] cluster scaffold protein carrying a second [4Fe-4S](2+) cluster] + N(6)-octanoyl-L-lysyl-[protein] + 2 oxidized [2Fe-2S]-[ferredoxin] + 2 S-adenosyl-L-methionine + 4 H(+) = [[Fe-S] cluster scaffold protein] + N(6)-[(R)-dihydrolipoyl]-L-lysyl-[protein] + 4 Fe(3+) + 2 hydrogen sulfide + 2 5'-deoxyadenosine + 2 L-methionine + 2 reduced [2Fe-2S]-[ferredoxin]. Its pathway is protein modification; protein lipoylation via endogenous pathway; protein N(6)-(lipoyl)lysine from octanoyl-[acyl-carrier-protein]: step 2/2. Functionally, catalyzes the radical-mediated insertion of two sulfur atoms into the C-6 and C-8 positions of the octanoyl moiety bound to the lipoyl domains of lipoate-dependent enzymes, thereby converting the octanoylated domains into lipoylated derivatives. In Vibrio campbellii (strain ATCC BAA-1116), this protein is Lipoyl synthase.